A 745-amino-acid chain; its full sequence is NAD(P)H-quinone oxidoreductase subunit 5, chloroplastic (745 aa).

Helical transmembrane passes span 9–29 (WIIP…LLLF), 50–70 (WAFP…DLSI), 99–119 (IDSL…FVLI), 135–155 (FAYM…CNLI), 157–177 (IYIF…FWFT), 194–214 (IGDF…GSFE), 229–249 (NEVH…GAVA), 268–288 (TPIS…FLVA), 290–310 (LFPL…IGII), 337–357 (LGYM…FHLI), 364–384 (ALLF…VGYS), 406–426 (IAFL…CFWS), 435–455 (WLYS…TAFY), 550–570 (LFPM…AIPF), 610–630 (FSVS…KPFY), and 724–744 (FYLL…YFIL).

It belongs to the complex I subunit 5 family. As to quaternary structure, NDH is composed of at least 16 different subunits, 5 of which are encoded in the nucleus.

The protein localises to the plastid. It is found in the chloroplast thylakoid membrane. It carries out the reaction a plastoquinone + NADH + (n+1) H(+)(in) = a plastoquinol + NAD(+) + n H(+)(out). The enzyme catalyses a plastoquinone + NADPH + (n+1) H(+)(in) = a plastoquinol + NADP(+) + n H(+)(out). In terms of biological role, NDH shuttles electrons from NAD(P)H:plastoquinone, via FMN and iron-sulfur (Fe-S) centers, to quinones in the photosynthetic chain and possibly in a chloroplast respiratory chain. The immediate electron acceptor for the enzyme in this species is believed to be plastoquinone. Couples the redox reaction to proton translocation, and thus conserves the redox energy in a proton gradient. In Gossypium barbadense (Sea Island cotton), this protein is NAD(P)H-quinone oxidoreductase subunit 5, chloroplastic (ndhF).